The following is a 78-amino-acid chain: Delta-conotoxin TxVIA (78 aa).

The signal sequence occupies residues 1-22 (MKLTCMMIVAVLFLTAWTFATA). A propeptide spanning residues 23–49 (DDSGNGLENLFSNAHHQMKNPEASKLN) is cleaved from the precursor. 3 disulfide bridges follow: Cys53/Cys68, Cys60/Cys72, and Cys67/Cys77. Residue Met59 is modified to Methionine sulfoxide; partial.

This sequence belongs to the conotoxin O1 superfamily. In terms of tissue distribution, expressed by the venom duct. Is present in all duct parts with a highest content in part 4 (distal part near the pharynx).

The protein resides in the secreted. Functionally, delta-conotoxins bind to site 6 of voltage-gated sodium channels (Nav) and inhibit the inactivation process. Binding of this toxin is strongly calcium-dependent but not voltage-dependent. The binding site is most likely on the extracellular side of the sodium channel. Binds receptor sites on both mollusk and rat central nervous system, but despite its high affinity binding to rat sodium channel, it has no functional effect in vivo and in vitro on it. Also has no effect on Gambusia fish. Is important in mollusk for the paralysis of the prey. Upon injection of the peptide, a subordinate lobster assumes an exaggerated dominant posture (of a 'King-Kong' lobster!). This Conus textile (Cloth-of-gold cone) protein is Delta-conotoxin TxVIA.